Here is a 310-residue protein sequence, read N- to C-terminus: Olfactory receptor 8B8 (310 aa).

Topologically, residues 1–27 are extracellular; it reads MATENASVPEFILAGLTDQPGLRMPLF. A glycan (N-linked (GlcNAc...) asparagine) is linked at Asn-5. A helical transmembrane segment spans residues 28 to 48; that stretch reads FLFLGFYMVTMVGNLGLITLI. At 49 to 55 the chain is on the cytoplasmic side; that stretch reads GLNSHLH. A helical membrane pass occupies residues 56 to 76; that stretch reads TPMYFFLFNLSLIDFCYSTVI. Topologically, residues 77–98 are extracellular; the sequence is TPKMLVSFVSKKNIISYSGCMT. A disulfide bridge links Cys-96 with Cys-188. Residues 99 to 119 traverse the membrane as a helical segment; sequence QLFFFLFFVVSESFILSAMAY. Residues 120-140 lie on the Cytoplasmic side of the membrane; the sequence is DRYVAICNPLMYTVTMSPQVC. A helical transmembrane segment spans residues 141-161; sequence LLLLLGVYVMGFAGAMAHTAF. The Extracellular portion of the chain corresponds to 162–195; it reads MVKLTFCADKLVNHYMCDILPLLERSCTSTYVNE. Residues 196 to 216 traverse the membrane as a helical segment; the sequence is LVVFIVVGIDIGVPTVTIFIS. Topologically, residues 217–238 are cytoplasmic; it reads YALILSSILRISSTEGRSKAFS. The helical transmembrane segment at 239 to 259 threads the bilayer; the sequence is TCSSHIIAVSLFFGSGAFMYL. Over 260 to 270 the chain is Extracellular; that stretch reads KPSSLLPMNQG. A helical transmembrane segment spans residues 271-291; sequence KVSSLFYTIVVPMLNPLIYSL. Topologically, residues 292–310 are cytoplasmic; sequence RNKDVKVALRKTLSRSSFS.

The protein belongs to the G-protein coupled receptor 1 family.

It localises to the cell membrane. In terms of biological role, odorant receptor. The polypeptide is Olfactory receptor 8B8 (Mus musculus (Mouse)).